The following is a 290-amino-acid chain: ATP synthase gamma chain (290 aa).

This sequence belongs to the ATPase gamma chain family. In terms of assembly, F-type ATPases have 2 components, CF(1) - the catalytic core - and CF(0) - the membrane proton channel. CF(1) has five subunits: alpha(3), beta(3), gamma(1), delta(1), epsilon(1). CF(0) has three main subunits: a, b and c.

It is found in the cell membrane. In terms of biological role, produces ATP from ADP in the presence of a proton gradient across the membrane. The gamma chain is believed to be important in regulating ATPase activity and the flow of protons through the CF(0) complex. This chain is ATP synthase gamma chain, found in Wolbachia sp. subsp. Brugia malayi (strain TRS).